Reading from the N-terminus, the 319-residue chain is tRNA uridine(34) hydroxylase (319 aa).

Positions Leu-125–Asp-219 constitute a Rhodanese domain. Cys-179 functions as the Cysteine persulfide intermediate in the catalytic mechanism.

Belongs to the TrhO family.

It carries out the reaction uridine(34) in tRNA + AH2 + O2 = 5-hydroxyuridine(34) in tRNA + A + H2O. Catalyzes oxygen-dependent 5-hydroxyuridine (ho5U) modification at position 34 in tRNAs. The chain is tRNA uridine(34) hydroxylase from Lactococcus lactis subsp. lactis (strain IL1403) (Streptococcus lactis).